A 167-amino-acid polypeptide reads, in one-letter code: NAD(P)H-quinone oxidoreductase subunit I, chloroplastic (167 aa).

2 4Fe-4S ferredoxin-type domains span residues 55 to 84 and 95 to 124; these read GRIH…VDWK and LNYS…MTEE. [4Fe-4S] cluster is bound by residues Cys64, Cys67, Cys70, Cys74, Cys104, Cys107, Cys110, and Cys114.

This sequence belongs to the complex I 23 kDa subunit family. In terms of assembly, NDH is composed of at least 16 different subunits, 5 of which are encoded in the nucleus. Requires [4Fe-4S] cluster as cofactor.

The protein resides in the plastid. The protein localises to the chloroplast thylakoid membrane. It catalyses the reaction a plastoquinone + NADH + (n+1) H(+)(in) = a plastoquinol + NAD(+) + n H(+)(out). The enzyme catalyses a plastoquinone + NADPH + (n+1) H(+)(in) = a plastoquinol + NADP(+) + n H(+)(out). Its function is as follows. NDH shuttles electrons from NAD(P)H:plastoquinone, via FMN and iron-sulfur (Fe-S) centers, to quinones in the photosynthetic chain and possibly in a chloroplast respiratory chain. The immediate electron acceptor for the enzyme in this species is believed to be plastoquinone. Couples the redox reaction to proton translocation, and thus conserves the redox energy in a proton gradient. This Lepidium virginicum (Virginia pepperweed) protein is NAD(P)H-quinone oxidoreductase subunit I, chloroplastic.